Consider the following 316-residue polypeptide: tRNA uridine(34) hydroxylase (316 aa).

One can recognise a Rhodanese domain in the interval 123 to 217 (LSDDTVVIDA…YGKDPETKGE (95 aa)). The active-site Cysteine persulfide intermediate is Cys177.

It belongs to the TrhO family.

It carries out the reaction uridine(34) in tRNA + AH2 + O2 = 5-hydroxyuridine(34) in tRNA + A + H2O. Catalyzes oxygen-dependent 5-hydroxyuridine (ho5U) modification at position 34 in tRNAs. This Staphylococcus saprophyticus subsp. saprophyticus (strain ATCC 15305 / DSM 20229 / NCIMB 8711 / NCTC 7292 / S-41) protein is tRNA uridine(34) hydroxylase.